A 257-amino-acid chain; its full sequence is Isoprenyl transferase (257 aa).

Residue aspartate 34 is part of the active site. Aspartate 34 is a binding site for Mg(2+). Substrate-binding positions include 35–38 (GNGR), tryptophan 39, arginine 47, histidine 51, and 79–81 (STE). Asparagine 82 serves as the catalytic Proton acceptor. Substrate-binding positions include tryptophan 83, arginine 85, arginine 202, and 208 to 210 (RLS). Mg(2+) is bound at residue glutamate 221.

It belongs to the UPP synthase family. As to quaternary structure, homodimer. Requires Mg(2+) as cofactor.

Its function is as follows. Catalyzes the condensation of isopentenyl diphosphate (IPP) with allylic pyrophosphates generating different type of terpenoids. This is Isoprenyl transferase from Geobacillus kaustophilus (strain HTA426).